We begin with the raw amino-acid sequence, 353 residues long: Photosystem II D2 protein (353 aa).

Thr2 bears the N-acetylthreonine mark. Residue Thr2 is modified to Phosphothreonine. The helical transmembrane segment at 41–61 (CAYFALGGWFTGTTFVTSWYT) threads the bilayer. His118 contacts chlorophyll a. The chain crosses the membrane as a helical span at residues 125–141 (GFMLRQFELARSVQLRP). Pheophytin a contacts are provided by Gln130 and Asn143. Residues 153–166 (VFVSVFLIYPLGQS) traverse the membrane as a helical segment. His198 lines the chlorophyll a pocket. Residues 208-228 (AALLCAIHGATVENTLFEDGD) form a helical membrane-spanning segment. 2 residues coordinate a plastoquinone: His215 and Phe262. His215 provides a ligand contact to Fe cation. His269 serves as a coordination point for Fe cation. A helical membrane pass occupies residues 279–295 (GLWMSALGVVGLALNLR).

The protein belongs to the reaction center PufL/M/PsbA/D family. In terms of assembly, PSII is composed of 1 copy each of membrane proteins PsbA, PsbB, PsbC, PsbD, PsbE, PsbF, PsbH, PsbI, PsbJ, PsbK, PsbL, PsbM, PsbT, PsbX, PsbY, PsbZ, Psb30/Ycf12, at least 3 peripheral proteins of the oxygen-evolving complex and a large number of cofactors. It forms dimeric complexes. The D1/D2 heterodimer binds P680, chlorophylls that are the primary electron donor of PSII, and subsequent electron acceptors. It shares a non-heme iron and each subunit binds pheophytin, quinone, additional chlorophylls, carotenoids and lipids. There is also a Cl(-1) ion associated with D1 and D2, which is required for oxygen evolution. The PSII complex binds additional chlorophylls, carotenoids and specific lipids. is required as a cofactor.

Its subcellular location is the plastid. It localises to the chloroplast thylakoid membrane. It carries out the reaction 2 a plastoquinone + 4 hnu + 2 H2O = 2 a plastoquinol + O2. In terms of biological role, photosystem II (PSII) is a light-driven water:plastoquinone oxidoreductase that uses light energy to abstract electrons from H(2)O, generating O(2) and a proton gradient subsequently used for ATP formation. It consists of a core antenna complex that captures photons, and an electron transfer chain that converts photonic excitation into a charge separation. The D1/D2 (PsbA/PsbD) reaction center heterodimer binds P680, the primary electron donor of PSII as well as several subsequent electron acceptors. D2 is needed for assembly of a stable PSII complex. This Lemna minor (Common duckweed) protein is Photosystem II D2 protein.